Consider the following 243-residue polypeptide: Ice-binding protein K3-B1 (243 aa).

The signal sequence occupies residues 1-20 (MFSASSLLAVIALAISSVSA).

It belongs to the ice-binding protein family.

Binds to the surface of ice crystals. Has low thermal hysteresis (TH) activity, which is the ability to lower the freezing point of an aqueous solution below its melting point. The TH activity of this protein is approximately 0.3 degrees Celsius at 11 mM. This Typhula ishikariensis (Gray snow mold fungus) protein is Ice-binding protein K3-B1.